The chain runs to 196 residues: MARLHSAVVLALALSSLLTEIAADCDVVSKKQWDGLIPVHVSYLARPVSLVIVQHTVTPFCRTDAGCEELVRNIQTNHMEALQYWDIGPSFLVGGNGKVYEGSGWLHVGAHTYGYNSRSIGVAFIGNFNTDEPSGAMLEALRSLLRCGVERGHLAGDYRAVAHRQLIASESPGRKLYNQIRRWPEWLENVDSIKNA.

Residues 1–23 (MARLHSAVVLALALSSLLTEIAA) form the signal peptide. 2 disulfide bridges follow: Cys-25-Cys-147 and Cys-61-Cys-67. The 128-residue stretch at 46 to 173 (RPVSLVIVQH…RQLIASESPG (128 aa)) folds into the N-acetylmuramoyl-L-alanine amidase domain.

This sequence belongs to the N-acetylmuramoyl-L-alanine amidase 2 family. Monomer. In terms of tissue distribution, constitutively expressed in fat body, epithelial cells and hemocytes. Not detected in Malpighian tubules, silk gland or midgut.

In terms of biological role, binds specifically to peptidoglycan and triggers the propenoloxidase cascade which is an important insect defense mechanism. The sequence is that of Peptidoglycan recognition protein from Bombyx mori (Silk moth).